The following is a 361-amino-acid chain: Mitogen-activated protein kinase 14 (361 aa).

A Protein kinase domain is found at 32–316; that stretch reads YVPIKPIGRG…VSDALLHPYM (285 aa). Residues 38–46 and Lys61 contribute to the ATP site; that span reads IGRGAYGVV. Residue Asp158 is the Proton acceptor of the active site. Thr188 is modified (phosphothreonine). A TXY motif is present at residues 188–190; sequence TEY. At Tyr190 the chain carries Phosphotyrosine. Residue Thr193 is modified to Phosphothreonine.

Belongs to the protein kinase superfamily. CMGC Ser/Thr protein kinase family. MAP kinase subfamily. As to quaternary structure, interacts with MKK3. In terms of processing, dually phosphorylated on Thr-188 and Tyr-190, which activates the enzyme.

The enzyme catalyses L-seryl-[protein] + ATP = O-phospho-L-seryl-[protein] + ADP + H(+). It carries out the reaction L-threonyl-[protein] + ATP = O-phospho-L-threonyl-[protein] + ADP + H(+). Its activity is regulated as follows. Activated by threonine and tyrosine phosphorylation. The sequence is that of Mitogen-activated protein kinase 14 (MPK14) from Arabidopsis thaliana (Mouse-ear cress).